Consider the following 159-residue polypeptide: MFNFINSLKNYSQESFRAARYIGQGFIVTLNHINRSAITVQYPYEKLITSERFRGRIHFEFDKCIVCEVCVRVCPINLPVVDWNFQQDIRKKKLKNYSIDFGVCIFCGNCVEYCPTNCLSMTEEYELSVYDRHELNYDQIALGRLPFNSFQDALVTKAS.

4Fe-4S ferredoxin-type domains follow at residues 55 to 84 and 95 to 124; these read GRIHFEFDKCIVCEVCVRVCPINLPVVDWN and KNYSIDFGVCIFCGNCVEYCPTNCLSMTEE. [4Fe-4S] cluster-binding residues include Cys64, Cys67, Cys70, Cys74, Cys104, Cys107, Cys110, and Cys114.

This sequence belongs to the complex I 23 kDa subunit family. NDH is composed of at least 16 different subunits, 5 of which are encoded in the nucleus. [4Fe-4S] cluster serves as cofactor.

It localises to the plastid. The protein localises to the chloroplast thylakoid membrane. It catalyses the reaction a plastoquinone + NADH + (n+1) H(+)(in) = a plastoquinol + NAD(+) + n H(+)(out). The catalysed reaction is a plastoquinone + NADPH + (n+1) H(+)(in) = a plastoquinol + NADP(+) + n H(+)(out). Its function is as follows. NDH shuttles electrons from NAD(P)H:plastoquinone, via FMN and iron-sulfur (Fe-S) centers, to quinones in the photosynthetic chain and possibly in a chloroplast respiratory chain. The immediate electron acceptor for the enzyme in this species is believed to be plastoquinone. Couples the redox reaction to proton translocation, and thus conserves the redox energy in a proton gradient. The protein is NAD(P)H-quinone oxidoreductase subunit I, chloroplastic of Chara vulgaris (Common stonewort).